Consider the following 621-residue polypeptide: Uptake hydrogenase large subunit (621 aa).

Ni(2+) contacts are provided by Cys75, Cys78, Cys600, and Cys603.

Belongs to the [NiFe]/[NiFeSe] hydrogenase large subunit family. Heterodimer of a large and a small subunit. It depends on Ni(2+) as a cofactor.

Its subcellular location is the cell membrane. The enzyme catalyses H2 + A = AH2. Functionally, this enzyme recycles the H(2) produced by nitrogenase to increase the production of ATP and to protect nitrogenase against inhibition or damage by O(2) under carbon- or phosphate-limited conditions. This Alcaligenes hydrogenophilus protein is Uptake hydrogenase large subunit (hupL).